An 862-amino-acid polypeptide reads, in one-letter code: Leucine--tRNA ligase (862 aa).

The 'HIGH' region motif lies at 44–54 (PYPSGRIHMGH). A 'KMSKS' region motif is present at residues 622–626 (KMSKS). Position 625 (lysine 625) interacts with ATP.

It belongs to the class-I aminoacyl-tRNA synthetase family.

The protein resides in the cytoplasm. It carries out the reaction tRNA(Leu) + L-leucine + ATP = L-leucyl-tRNA(Leu) + AMP + diphosphate. The protein is Leucine--tRNA ligase of Rhodospirillum rubrum (strain ATCC 11170 / ATH 1.1.1 / DSM 467 / LMG 4362 / NCIMB 8255 / S1).